The chain runs to 341 residues: Holliday junction branch migration complex subunit RuvB (341 aa).

Positions 1–21 are disordered; the sequence is MSQPDPMLRPEPLESDGEDRA. The large ATPase domain (RuvB-L) stretch occupies residues 4-183; it reads PDPMLRPEPL…FGIPTRLQFY (180 aa). ATP is bound by residues leucine 22, arginine 23, glycine 64, lysine 67, threonine 68, threonine 69, 130–132, arginine 173, tyrosine 183, and arginine 220; that span reads EDF. Position 68 (threonine 68) interacts with Mg(2+). The interval 184–254 is small ATPAse domain (RuvB-S); the sequence is TIEELDLIVT…IADSALTRLG (71 aa). The tract at residues 257–341 is head domain (RuvB-H); it reads HLGLDTADRR…PRTQESLFDE (85 aa). Residues arginine 293, arginine 312, and arginine 317 each contribute to the DNA site.

Belongs to the RuvB family. Homohexamer. Forms an RuvA(8)-RuvB(12)-Holliday junction (HJ) complex. HJ DNA is sandwiched between 2 RuvA tetramers; dsDNA enters through RuvA and exits via RuvB. An RuvB hexamer assembles on each DNA strand where it exits the tetramer. Each RuvB hexamer is contacted by two RuvA subunits (via domain III) on 2 adjacent RuvB subunits; this complex drives branch migration. In the full resolvosome a probable DNA-RuvA(4)-RuvB(12)-RuvC(2) complex forms which resolves the HJ.

Its subcellular location is the cytoplasm. It catalyses the reaction ATP + H2O = ADP + phosphate + H(+). In terms of biological role, the RuvA-RuvB-RuvC complex processes Holliday junction (HJ) DNA during genetic recombination and DNA repair, while the RuvA-RuvB complex plays an important role in the rescue of blocked DNA replication forks via replication fork reversal (RFR). RuvA specifically binds to HJ cruciform DNA, conferring on it an open structure. The RuvB hexamer acts as an ATP-dependent pump, pulling dsDNA into and through the RuvAB complex. RuvB forms 2 homohexamers on either side of HJ DNA bound by 1 or 2 RuvA tetramers; 4 subunits per hexamer contact DNA at a time. Coordinated motions by a converter formed by DNA-disengaged RuvB subunits stimulates ATP hydrolysis and nucleotide exchange. Immobilization of the converter enables RuvB to convert the ATP-contained energy into a lever motion, pulling 2 nucleotides of DNA out of the RuvA tetramer per ATP hydrolyzed, thus driving DNA branch migration. The RuvB motors rotate together with the DNA substrate, which together with the progressing nucleotide cycle form the mechanistic basis for DNA recombination by continuous HJ branch migration. Branch migration allows RuvC to scan DNA until it finds its consensus sequence, where it cleaves and resolves cruciform DNA. The protein is Holliday junction branch migration complex subunit RuvB of Paracoccus denitrificans (strain Pd 1222).